The chain runs to 170 residues: Chorion protein S18 (170 aa).

The first 17 residues, 1 to 17 (MMKFMCIFVCAIAAVSA), serve as a signal peptide directing secretion. The segment covering 146-159 (AAAASSSVAGQHSG) has biased composition (low complexity). The interval 146 to 170 (AAAASSSVAGQHSGYKNSGYKNSSY) is disordered. The segment covering 160–170 (YKNSGYKNSSY) has biased composition (polar residues).

It belongs to the chorion protein S15/S18 family.

The protein resides in the secreted. In terms of biological role, chorion membrane (egg shell) protein; plays a role in protecting the egg from the environment. The protein is Chorion protein S18 (Cp18) of Drosophila virilis (Fruit fly).